The sequence spans 78 residues: Large ribosomal subunit protein uL24 (78 aa).

This sequence belongs to the universal ribosomal protein uL24 family. As to quaternary structure, part of the 50S ribosomal subunit.

Its function is as follows. One of two assembly initiator proteins, it binds directly to the 5'-end of the 23S rRNA, where it nucleates assembly of the 50S subunit. One of the proteins that surrounds the polypeptide exit tunnel on the outside of the subunit. The chain is Large ribosomal subunit protein uL24 from Helicobacter hepaticus (strain ATCC 51449 / 3B1).